A 199-amino-acid polypeptide reads, in one-letter code: Imidazoleglycerol-phosphate dehydratase (199 aa).

It belongs to the imidazoleglycerol-phosphate dehydratase family.

The protein resides in the cytoplasm. It catalyses the reaction D-erythro-1-(imidazol-4-yl)glycerol 3-phosphate = 3-(imidazol-4-yl)-2-oxopropyl phosphate + H2O. It participates in amino-acid biosynthesis; L-histidine biosynthesis; L-histidine from 5-phospho-alpha-D-ribose 1-diphosphate: step 6/9. The polypeptide is Imidazoleglycerol-phosphate dehydratase (Lactococcus lactis subsp. cremoris (strain MG1363)).